The primary structure comprises 1453 residues: Leucine-rich repeat-containing protein 9 (1453 aa).

7 LRR repeats span residues 53 to 78 (FPNL…CLQL), 97 to 119 (CRNL…LEKL), 120 to 141 (IKLK…LQTL), 142 to 164 (KNLK…LDSN), 166 to 188 (QLER…NLTR), 224 to 248 (LQRF…AMKK), and 264 to 287 (KEDL…RVKL). The disordered stretch occupies residues 302–321 (LKGSGKGHSDGSNNSKVTDP). LRR repeat units lie at residues 344-367 (LNAL…IYHI), 671-693 (KARP…TSVY), 694-715 (SHIV…LSKL), 716-737 (TGLR…VYHL), 739-758 (NLEY…GFRG), 759-784 (LMKL…MLCK), 786-812 (TTSL…VIGR), 886-908 (YLKI…LEKL), 909-930 (ENLK…LESC), 931-952 (INLE…ISKM), 953-975 (TKLT…TFDN), 976-1001 (MLHL…SFTL), 1023-1048 (LCNL…LFVI), 1092-1115 (FKQM…PVDQ), 1116-1138 (FRNV…LIYL), 1139-1161 (PNVK…LKPQ), 1201-1224 (MHSL…QLNR), 1225-1247 (LRNL…LDNL), 1248-1270 (VVLQ…AFAK), 1272-1292 (SSLL…KLQS), 1293-1317 (LVKL…KLDV), 1319-1345 (STLR…IFRL), and 1365-1388 (EFHL…PMDG).

This Homo sapiens (Human) protein is Leucine-rich repeat-containing protein 9 (LRRC9).